Reading from the N-terminus, the 94-residue chain is Co-chaperonin GroES (94 aa).

The protein belongs to the GroES chaperonin family. Heptamer of 7 subunits arranged in a ring. Interacts with the chaperonin GroEL.

The protein resides in the cytoplasm. Together with the chaperonin GroEL, plays an essential role in assisting protein folding. The GroEL-GroES system forms a nano-cage that allows encapsulation of the non-native substrate proteins and provides a physical environment optimized to promote and accelerate protein folding. GroES binds to the apical surface of the GroEL ring, thereby capping the opening of the GroEL channel. This chain is Co-chaperonin GroES, found in Finegoldia magna (strain ATCC 29328 / DSM 20472 / WAL 2508) (Peptostreptococcus magnus).